We begin with the raw amino-acid sequence, 248 residues long: Granzyme F (248 aa).

A signal peptide spans 1–18; the sequence is MPPILILLTLLLPLRAGA. The propeptide occupies 19 to 20; that stretch reads EE. Residues 21–246 enclose the Peptidase S1 domain; that stretch reads IIGGHEVKPH…YLPWISRNMK (226 aa). A disulfide bond links Cys-50 and Cys-66. Catalysis depends on His-65, which acts as the Charge relay system. Asn-106 carries an N-linked (GlcNAc...) asparagine glycan. The active-site Charge relay system is Asp-109. 2 disulfides stabilise this stretch: Cys-143–Cys-210 and Cys-175–Cys-189. The N-linked (GlcNAc...) asparagine glycan is linked to Asn-154. The active-site Charge relay system is the Ser-204. Asn-223 carries N-linked (GlcNAc...) asparagine glycosylation.

It belongs to the peptidase S1 family. Granzyme subfamily.

The protein localises to the cytolytic granule. Its function is as follows. This enzyme is probably necessary for target cell lysis in cell-mediated immune responses. In Mus musculus (Mouse), this protein is Granzyme F (Gzmf).